The chain runs to 702 residues: Protein sepa-1 (702 aa).

The interval 39 to 160 (RQRFCYEKTD…KESTSYGQFR (122 aa)) is required for self-association and interaction with pgl-3. 3 short sequence motifs (LIR) span residues 107-110 (FVEV), 247-250 (FQKI), and 298-301 (FGFV). Residues 450–471 (AKDPEEPTTAASEGGNTYGYQE) are disordered. Polar residues predominate over residues 458–468 (TAASEGGNTYG). The LIR 4 signature appears at 469–472 (YQEL). The stretch at 508–543 (AAMDKKKKRRELKSRLNKINAQIDELEKRRMERAGK) forms a coiled coil. The segment at 545–564 (QVVSSSVPSEEAAQVEAPAS) is disordered. A KIX domain is found at 597–674 (NTSKEWIVED…TVDQILKKTL (78 aa)). Basic and acidic residues predominate over residues 675 to 685 (KKDQRATEHNH). The segment at 675–702 (KKDQRATEHNHQQPTQSSDELAKNHEKN) is disordered.

As to quaternary structure, self-associates. Interacts (via the LIR motifs) with lgg-1; the interaction is direct. Interacts (via the LIR motifs) with lgg-2; the interaction is direct. Interacts with pgl-3; interaction is enhanced in the presence of RNA. Interacts with epg-2; may be modulated by prmt-1. In terms of processing, degraded by autophagy.

It localises to the nucleus. It is found in the cytoplasm. Its subcellular location is the cytoplasmic granule. Functionally, adapter protein that connects P-granules in somatic cells with the autophagic machinery. Association with other adapters such as epg-2 and P-granule components such as pgl-3 is required for the accumulation and degradation of P-granules by autophagy in somatic cells. This ensures exclusive localization of the P-granules in germ cells. The sequence is that of Protein sepa-1 from Caenorhabditis elegans.